We begin with the raw amino-acid sequence, 567 residues long: PCNA-interacting partner (567 aa).

A disordered region spans residues 485-552 (IDLKTAEQVK…GVSRNKASKN (68 aa)). Polar residues-rich tracts occupy residues 512–524 (DIQSETTNGQENE) and 534–552 (LTSSKANKQGVSRNKASKN).

It belongs to the PARI family.

It localises to the cytoplasm. The protein localises to the nucleus. In terms of biological role, required to suppress inappropriate homologous recombination, thereby playing a central role DNA repair and in the maintenance of genomic stability. This is PCNA-interacting partner (parpbp) from Xenopus laevis (African clawed frog).